Consider the following 159-residue polypeptide: Major strawberry allergen Fra a 1-C (159 aa).

It belongs to the BetVI family. In terms of assembly, monomer.

The sequence is that of Major strawberry allergen Fra a 1-C from Fragaria ananassa (Strawberry).